The sequence spans 356 residues: Probable G-protein coupled receptor 32 (356 aa).

Residues M1–P44 are Extracellular-facing. N-linked (GlcNAc...) asparagine glycosylation is present at N30. The helical transmembrane segment at L45 to M67 threads the bilayer. Residues T68–T78 lie on the Cytoplasmic side of the membrane. A helical transmembrane segment spans residues V79–Y100. Residues Y101–L116 are Extracellular-facing. C114 and C191 are disulfide-bonded. Residues Y117–V137 form a helical membrane-spanning segment. At D138–Q156 the chain is on the cytoplasmic side. A helical membrane pass occupies residues R157–K178. Topologically, residues F179–H220 are extracellular. N199 carries an N-linked (GlcNAc...) asparagine glycan. Residues F221–A241 traverse the membrane as a helical segment. Over K242–L257 the chain is Cytoplasmic. Residues L258–L280 traverse the membrane as a helical segment. Over W281–A300 the chain is Extracellular. Residues S301–G320 form a helical membrane-spanning segment. Over R321 to E356 the chain is Cytoplasmic.

The protein belongs to the G-protein coupled receptor 1 family. Expressed in resting primary human macrophages.

Its subcellular location is the cell membrane. G-protein coupled receptor that binds to several ligands including resolvin D1 (RvD1) with high affinity, leading to rapid and transient activation of numerous intracellular signaling pathways. In macrophages, enhances the RvD1-stimulated phagocytic and clearance functions. Macrophages migrate less toward different chemoattractant stimuli but phagocytose more microbial particles. Prevents the increase in Ca(2+) and activation of ERK1/2 used by histamine and its H1 receptor subtype to induce goblet cell secretion by activating PKC and GRK2 to counter-regulate the histamine receptor. This Homo sapiens (Human) protein is Probable G-protein coupled receptor 32 (GPR32).